A 349-amino-acid chain; its full sequence is Phenylalanine--tRNA ligase alpha subunit (349 aa).

Glutamate 258 contacts Mg(2+).

The protein belongs to the class-II aminoacyl-tRNA synthetase family. Phe-tRNA synthetase alpha subunit type 1 subfamily. In terms of assembly, tetramer of two alpha and two beta subunits. It depends on Mg(2+) as a cofactor.

It localises to the cytoplasm. It carries out the reaction tRNA(Phe) + L-phenylalanine + ATP = L-phenylalanyl-tRNA(Phe) + AMP + diphosphate + H(+). This is Phenylalanine--tRNA ligase alpha subunit from Rickettsia africae (strain ESF-5).